The chain runs to 423 residues: Serine--tRNA ligase (423 aa).

231–233 (TGE) lines the L-serine pocket. Residue 262–264 (RSE) participates in ATP binding. Glu-285 provides a ligand contact to L-serine. 349–352 (EISS) is an ATP binding site. L-serine is bound at residue Ser-385.

Belongs to the class-II aminoacyl-tRNA synthetase family. Type-1 seryl-tRNA synthetase subfamily. In terms of assembly, homodimer. The tRNA molecule binds across the dimer.

The protein resides in the cytoplasm. The catalysed reaction is tRNA(Ser) + L-serine + ATP = L-seryl-tRNA(Ser) + AMP + diphosphate + H(+). It carries out the reaction tRNA(Sec) + L-serine + ATP = L-seryl-tRNA(Sec) + AMP + diphosphate + H(+). The protein operates within aminoacyl-tRNA biosynthesis; selenocysteinyl-tRNA(Sec) biosynthesis; L-seryl-tRNA(Sec) from L-serine and tRNA(Sec): step 1/1. In terms of biological role, catalyzes the attachment of serine to tRNA(Ser). Is also able to aminoacylate tRNA(Sec) with serine, to form the misacylated tRNA L-seryl-tRNA(Sec), which will be further converted into selenocysteinyl-tRNA(Sec). This is Serine--tRNA ligase from Coxiella burnetii (strain CbuK_Q154) (Coxiella burnetii (strain Q154)).